Reading from the N-terminus, the 337-residue chain is MLFISRSLLPILYFQLFKKMSPFRLLSLPTLALKNVLLHIDFIDLLELSLASKKCEIYMKTCCLKIDSLHFHFRRIQLNSKSKSLEFDFNSVVDISACSRKVKGSRYDAWTKNYDESRIICIPTNFDEDIIAVFQHFWDLFQIKNLHYDVVGFTGVFLNNTMARLPSKLKSLEFGDYLSGNQDNIDTILNYYDISDNLKVFDEVSKIHEKMKKVNNLSLICLPSIPIEELIQLDCETIKLYWKENSAINAVRSLISNWKGNKTRLEHLEILASEDWNFDLVLEGMNAKPWNPRRRPSNYQKEDLNIDCTSYMDIEGDCQIASIGIRENRYLDFIVWF.

One can recognise an F-box domain in the interval 22-76; it reads PFRLLSLPTLALKNVLLHIDFIDLLELSLASKKCEIYMKTCCLKIDSLHFHFRRI.

This is an uncharacterized protein from Caenorhabditis elegans.